The chain runs to 338 residues: MLNERAKILLKTLVERYIHEGQPVGSRSLAKFSGLDLSPATIRNVMTDLEEMGFVSSPHTSAGRMPTTLGYRFFVDTLLVVQSLDNEQITLLENRMHPNNPSHLINVTSRLLSDLTQFVGVVVTPKRMGGAVFRHIEFVPLSEKRILLILVTPEGDVQNRIIFTETVYNQSDLIEAGNFLNQHYAGCALEEIRSGLQHELTQLRRNMTDLMNAAIEIGNAALQESSEAVVIAGEHKLFDVRDLSENLSSLKQLFELFERKSKLLQLMELSRQACGVKIFIGGESDETMLEEISVVTAPYEMEGKIVGTVGVIGPRRMAYERIIPIVDITARLLSNNLS.

Belongs to the HrcA family.

In terms of biological role, negative regulator of class I heat shock genes (grpE-dnaK-dnaJ and groELS operons). Prevents heat-shock induction of these operons. This is Heat-inducible transcription repressor HrcA from Nitrosomonas eutropha (strain DSM 101675 / C91 / Nm57).